Consider the following 729-residue polypeptide: Phosphoribosylformylglycinamidine synthase subunit PurL (729 aa).

Histidine 54 is an active-site residue. ATP is bound by residues tyrosine 57 and lysine 96. A Mg(2+)-binding site is contributed by glutamate 98. Substrate contacts are provided by residues 99–102 and arginine 121; that span reads SHNH. Residue histidine 100 is the Proton acceptor of the active site. Aspartate 122 provides a ligand contact to Mg(2+). Residue glutamine 245 coordinates substrate. A Mg(2+)-binding site is contributed by aspartate 273. 317–319 is a binding site for substrate; sequence ETQ. ATP is bound by residues aspartate 495 and glycine 532. A Mg(2+)-binding site is contributed by asparagine 533. Residue serine 535 participates in substrate binding.

The protein belongs to the FGAMS family. As to quaternary structure, monomer. Part of the FGAM synthase complex composed of 1 PurL, 1 PurQ and 2 PurS subunits.

Its subcellular location is the cytoplasm. The catalysed reaction is N(2)-formyl-N(1)-(5-phospho-beta-D-ribosyl)glycinamide + L-glutamine + ATP + H2O = 2-formamido-N(1)-(5-O-phospho-beta-D-ribosyl)acetamidine + L-glutamate + ADP + phosphate + H(+). It participates in purine metabolism; IMP biosynthesis via de novo pathway; 5-amino-1-(5-phospho-D-ribosyl)imidazole from N(2)-formyl-N(1)-(5-phospho-D-ribosyl)glycinamide: step 1/2. Its function is as follows. Part of the phosphoribosylformylglycinamidine synthase complex involved in the purines biosynthetic pathway. Catalyzes the ATP-dependent conversion of formylglycinamide ribonucleotide (FGAR) and glutamine to yield formylglycinamidine ribonucleotide (FGAM) and glutamate. The FGAM synthase complex is composed of three subunits. PurQ produces an ammonia molecule by converting glutamine to glutamate. PurL transfers the ammonia molecule to FGAR to form FGAM in an ATP-dependent manner. PurS interacts with PurQ and PurL and is thought to assist in the transfer of the ammonia molecule from PurQ to PurL. In Staphylococcus carnosus (strain TM300), this protein is Phosphoribosylformylglycinamidine synthase subunit PurL.